The primary structure comprises 1311 residues: Clustered mitochondria protein homolog (1311 aa).

Residues 1-18 show a composition bias toward low complexity; sequence MAEKTNGAAAPNGAADAP. The interval 1 to 27 is disordered; sequence MAEKTNGAAAPNGAADAPKSSPEQAQD. Positions 324–568 constitute a Clu domain; the sequence is DITRTQESFL…RITPLDVSWQ (245 aa). A TPR 1 repeat occupies 491-525; it reads IDYGAVDGKDLVATDERFVPQFQKLSKALKVKPHA. The span at 606–630 shows a compositional bias: basic and acidic residues; it reads SEVAKRGQAKKDQAAVEEKKEAKAE. Disordered stretches follow at residues 606–694 and 925–966; these read SEVA…SSDR and PAPV…SSTI. Acidic residues predominate over residues 631 to 661; it reads SEEDSDSSSEEESSSDESDSEESSSDEDEEE. Positions 665 to 675 are enriched in basic residues; that stretch reads PKKKSVPKKAA. A compositionally biased stretch (basic and acidic residues) spans 676–694; sequence KKEEVKEEKKDEKEASSDR. 3 TPR repeats span residues 1034 to 1067, 1076 to 1109, and 1118 to 1151; these read ARVYHSLAMLYFQLEEKDAAVELARKAVIVAERT, LLDYLNLSLFLYQLGDSKQALEFTKHALNMWKII, and ITTINNAAVMLQQLKEYHESRRWFEEALRICEVV. Basic and acidic residues predominate over residues 1276 to 1286; sequence LKFIEGTDKQK. A disordered region spans residues 1276 to 1311; sequence LKFIEGTDKQKKPAAKKRTGRANPKRRGAEPVSTKA. The span at 1287 to 1301 shows a compositional bias: basic residues; the sequence is KPAAKKRTGRANPKR.

It belongs to the CLU family. As to quaternary structure, may associate with the eukaryotic translation initiation factor 3 (eIF-3) complex.

The protein localises to the cytoplasm. MRNA-binding protein involved in proper cytoplasmic distribution of mitochondria. The protein is Clustered mitochondria protein homolog of Pyricularia oryzae (strain 70-15 / ATCC MYA-4617 / FGSC 8958) (Rice blast fungus).